The primary structure comprises 309 residues: Probable 2,4-dienoyl-CoA reductase decr-1.2 [(3E)-enoyl-CoA-producing] (309 aa).

Residues 28–60 (VLVTGGGTGIGKAIATTFAHLRATVVIAARRME), 32–37 (GGGTGI), Arg57, and Asp83 contribute to the NADP(+) site. Arg57 provides a ligand contact to substrate. Substrate contacts are provided by Phe116 and Ser124. Residue Tyr166 is the Proton acceptor of the active site. Residues Lys181 and 207-210 (PGPI) contribute to the NADP(+) site. Arg218 is a binding site for substrate.

Belongs to the short-chain dehydrogenases/reductases (SDR) family. 2,4-dienoyl-CoA reductase subfamily.

It catalyses the reaction a (2E,4E)-dienoyl-CoA + NADPH + H(+) = a 4,5-saturated-(3E)-enoyl-CoA + NADP(+). The catalysed reaction is a (2E,4Z)-dienoyl-CoA + NADPH + H(+) = a 4,5-saturated-(3E)-enoyl-CoA + NADP(+). Its function is as follows. Auxiliary enzyme of beta-oxidation. It participates in the metabolism of unsaturated fatty enoyl-CoA esters having double bonds in both even- and odd-numbered positions. Catalyzes the NADP-dependent reduction of 2,4-dienoyl-CoA to yield trans-3-enoyl-CoA. This chain is Probable 2,4-dienoyl-CoA reductase decr-1.2 [(3E)-enoyl-CoA-producing], found in Caenorhabditis elegans.